The chain runs to 354 residues: Guanine nucleotide-binding protein G(t) subunit alpha-2 (354 aa).

The segment at 1 to 27 (MGSGASAEDKELAKRSKELEKKLQEDA) is disordered. Residue G2 is the site of N-myristoyl glycine attachment. The span at 7–27 (AEDKELAKRSKELEKKLQEDA) shows a compositional bias: basic and acidic residues. The region spanning 32–354 (KTVKLLLLGA…KENLKDCGLF (323 aa)) is the G-alpha domain. The G1 motif stretch occupies residues 35 to 48 (KLLLLGAGESGKST). Residues 40–47 (GAGESGKS), 175–181 (LRSRVKT), 200–204 (DVGGQ), 269–272 (NKKD), and A326 each bind GTP. Residues S47 and T181 each coordinate Mg(2+). The tract at residues 173 to 181 (DVLRSRVKT) is G2 motif. The segment at 196 to 205 (FRMFDVGGQR) is G3 motif. The G4 motif stretch occupies residues 265 to 272 (VLFLNKKD). The tract at residues 324 to 329 (TCATDT) is G5 motif.

This sequence belongs to the G-alpha family. G(i/o/t/z) subfamily. G proteins are composed of 3 units; alpha, beta and gamma. The alpha chain contains the guanine nucleotide binding site. In terms of tissue distribution, retinal rod outer segment.

It is found in the cell projection. It localises to the cilium. The protein resides in the photoreceptor outer segment. The protein localises to the photoreceptor inner segment. Functionally, guanine nucleotide-binding proteins (G proteins) are involved as modulators or transducers in various transmembrane signaling systems. Transducin is an amplifier and one of the transducers of a visual impulse that performs the coupling between rhodopsin and cGMP-phosphodiesterase. In Bos taurus (Bovine), this protein is Guanine nucleotide-binding protein G(t) subunit alpha-2 (GNAT2).